Here is a 654-residue protein sequence, read N- to C-terminus: MLHQGIILREGHVTRTIYNLIKDKRYEDVIECITNIGEAANTRAGLSTLGHCYYHAQKYEEAATCYEQLCQLAPKEAKYRFYYAQSLYQAGIFAEALRVLKQISDQEEELREHCLQLQSAILYSSEDYAGAQSLLNQRAGGTADTLNDEGCLLYQADQHESAVQRFQAALQVGGFNPLVAYNVALAHFQRKQRAQALDYTSEIVERGVRNHPELGIGAQVDTDGSARSVGNPITMAMSGITQALNLKAALEYQDGNEEGAREALLDLPPRAESELDPVTLHNMALTDVQGPVAGLRKLAFLLQLGAPSCPKETFANILLICCRHELYETAADILAEHTDLTYKYLSQYLYELLDALITAQTSVELAEKKLGTLASSLAGKLRSLAAKVQEVRATNEQHALRDALKDYEQALELYLPVVMARAWISWRDDDFVGAEREFHSSAEFCSENAVWRLNAGHVLFMQGDKYNEAAAFYEPIVRQHSDDIMSVSAAVLANLCVSYIMTFQNEEAEELMRKVEKAEELKGNLGKQYHHLCIVNLVVGTLYCAKSNYEFGLTRIAHALEGGAGGRLYADTWLHVKRCILGLLTGMAKQNIILPYTAVQEVLGFLRSCEAYGLFTPANIFTATEQVPEEPLTIGLEARKLRLLLLKLSEYENC.

TPR repeat units lie at residues 10 to 43, 44 to 76, 143 to 176, 178 to 210, 384 to 417, 449 to 483, and 533 to 566; these read EGHV…ANTR, AGLS…APKE, ADTL…GGFN, LVAY…GVRN, LAAK…YLPV, AVWR…HSDD, and CIVN…GAGG.

Belongs to the TTC30/dfy-1/fleer family.

It is found in the cell projection. It localises to the cilium. In terms of biological role, required for polyglutamylation of axonemal tubulin in sensory cilia. Plays a role in anterograde intraflagellar transport (IFT), the process by which cilia precursors are transported from the base of the cilium to the site of their incorporation at the tip. This chain is Tetratricopeptide repeat protein 30 homolog, found in Drosophila pseudoobscura pseudoobscura (Fruit fly).